The chain runs to 418 residues: Probable serine/threonine-protein kinase nek2 (418 aa).

Residues Y4–I264 form the Protein kinase domain. Residues L10 to V18 and K33 contribute to the ATP site. Catalysis depends on D135, which acts as the Proton acceptor. Positions Q278–S363 form a coiled coil.

Belongs to the protein kinase superfamily. NEK Ser/Thr protein kinase family. NIMA subfamily.

The catalysed reaction is L-seryl-[protein] + ATP = O-phospho-L-seryl-[protein] + ADP + H(+). The enzyme catalyses L-threonyl-[protein] + ATP = O-phospho-L-threonyl-[protein] + ADP + H(+). Functionally, involved in centrosome biogenesis. Seems to be required for recruitment of centrosomal material and might be involved in de novo centrosome formation. The polypeptide is Probable serine/threonine-protein kinase nek2 (nek2) (Dictyostelium discoideum (Social amoeba)).